We begin with the raw amino-acid sequence, 180 residues long: UPF0227 protein YcfP (180 aa).

The protein belongs to the UPF0227 family.

The polypeptide is UPF0227 protein YcfP (Escherichia coli O7:K1 (strain IAI39 / ExPEC)).